The sequence spans 178 residues: Large ribosomal subunit protein eL20x (178 aa).

It belongs to the eukaryotic ribosomal protein eL20 family.

The protein is Large ribosomal subunit protein eL20x (RPL18AC) of Arabidopsis thaliana (Mouse-ear cress).